Reading from the N-terminus, the 683-residue chain is Translation initiation factor IF-2 (683 aa).

A tr-type G domain is found at 182 to 351 (KRPPVVTVMG…ILTAEMEELK (170 aa)). Positions 191 to 198 (GHVDHGKT) are G1. Residue 191–198 (GHVDHGKT) participates in GTP binding. Residues 216–220 (GITQH) are G2. Residues 237 to 240 (DTPG) are G3. GTP is bound by residues 237–241 (DTPGH) and 291–294 (NKID). Positions 291-294 (NKID) are G4. The tract at residues 327-329 (SAH) is G5.

The protein belongs to the TRAFAC class translation factor GTPase superfamily. Classic translation factor GTPase family. IF-2 subfamily.

The protein localises to the cytoplasm. One of the essential components for the initiation of protein synthesis. Protects formylmethionyl-tRNA from spontaneous hydrolysis and promotes its binding to the 30S ribosomal subunits. Also involved in the hydrolysis of GTP during the formation of the 70S ribosomal complex. The chain is Translation initiation factor IF-2 from Clostridium novyi (strain NT).